The chain runs to 104 residues: Phosphoribosyl-ATP pyrophosphatase (104 aa).

The protein belongs to the PRA-PH family.

The protein localises to the cytoplasm. It carries out the reaction 1-(5-phospho-beta-D-ribosyl)-ATP + H2O = 1-(5-phospho-beta-D-ribosyl)-5'-AMP + diphosphate + H(+). It functions in the pathway amino-acid biosynthesis; L-histidine biosynthesis; L-histidine from 5-phospho-alpha-D-ribose 1-diphosphate: step 2/9. The sequence is that of Phosphoribosyl-ATP pyrophosphatase from Streptococcus gordonii (strain Challis / ATCC 35105 / BCRC 15272 / CH1 / DL1 / V288).